Reading from the N-terminus, the 137-residue chain is Large ribosomal subunit protein uL16 (137 aa).

This sequence belongs to the universal ribosomal protein uL16 family. In terms of assembly, part of the 50S ribosomal subunit.

Functionally, binds 23S rRNA and is also seen to make contacts with the A and possibly P site tRNAs. The protein is Large ribosomal subunit protein uL16 of Pseudomonas fluorescens (strain Pf0-1).